The chain runs to 137 residues: Large ribosomal subunit protein uL16 (137 aa).

It belongs to the universal ribosomal protein uL16 family. In terms of assembly, part of the 50S ribosomal subunit.

In terms of biological role, binds 23S rRNA and is also seen to make contacts with the A and possibly P site tRNAs. The polypeptide is Large ribosomal subunit protein uL16 (Rhizobium rhizogenes (strain K84 / ATCC BAA-868) (Agrobacterium radiobacter)).